The following is a 386-amino-acid chain: Putative gustatory receptor 22b (386 aa).

Residues 1–48 (MFGSSREIRPYLARQMLKTTLYGSWLLGIFPFTLDSGKRIRQLRRSRC) lie on the Cytoplasmic side of the membrane. Residues 49 to 69 (LTLYGLVLNYFLIFTLIRLAF) form a helical membrane-spanning segment. The Extracellular portion of the chain corresponds to 70–89 (EYRKHKLEAFKRNPVLEMIN). Residues 90 to 110 (VVIGIINVLSALIVHFMNFWG) form a helical membrane-spanning segment. Residues 111-155 (SRKVGEICNELLILEYQDFEGLNGRNCPNFNCFVIQKCLTILGQL) lie on the Cytoplasmic side of the membrane. The chain crosses the membrane as a helical span at residues 156–176 (LSFFTLNFALPGLEFHICLVL). Over 177 to 178 (LS) the chain is Extracellular. The chain crosses the membrane as a helical span at residues 179–199 (CLMEFSLNLNIMHYHVGVLLI). Over 200 to 254 (YRYVWLINEQLKDLVSQLKLNPETDFSRIHQFLSLYKRLLELNRKLVIAYEYQMT) the chain is Cytoplasmic. The chain crosses the membrane as a helical span at residues 255-275 (LFIIAQLSGNIVVIYFLIVYG). The Extracellular segment spans residues 276–282 (LSMRTYS). The helical transmembrane segment at 283 to 303 (IFLVAFPNSLLINIWDFWLCI) threads the bilayer. At 304-363 (AACDLTEKAGDETAIILKIFSDLEHRDDKLEMSVNEFAWLCSHRKFRFQLCGLFSMNCRM) the chain is on the cytoplasmic side. The chain crosses the membrane as a helical span at residues 364-384 (GFKMIITTFLYLVYLVQFDYM). At 385–386 (NL) the chain is on the extracellular side.

This sequence belongs to the insect chemoreceptor superfamily. Gustatory receptor (GR) family. Gr22e subfamily. In terms of tissue distribution, expressed in taste bristles in the foreleg and labial palps. In larvae, is expressed in neurons of the dorsal and posterior pharyngeal sense organs. Expressed in taste neurons that mediate sensitivity to bitter compounds.

It localises to the cell membrane. Functionally, probable gustatory receptor which mediates acceptance or avoidance behavior, depending on its substrates. Seems to be involved in the sensing of bitter taste since it is expressed in neurons that mediate sensitivity to bitter compounds. The chain is Putative gustatory receptor 22b from Drosophila melanogaster (Fruit fly).